The following is a 50-amino-acid chain: uncharacterized protein (50 aa).

This is an uncharacterized protein from Bacillus subtilis (strain 168).